The chain runs to 499 residues: Eukaryotic peptide chain release factor GTP-binding subunit ERF3A (499 aa).

Positions 1–69 (MELSEPIVEN…PKSVVAPPGA (69 aa)) are disordered. Basic and acidic residues predominate over residues 41-50 (RPPEESAHEM). Residues 72 to 298 (KEHVNVVFIG…DNLPNFNRSV (227 aa)) enclose the tr-type G domain. The segment at 81 to 88 (GHVDAGKS) is G1. 84 to 89 (DAGKST) lines the GTP pocket. The segment at 137–141 (GKTVE) is G2. The segment at 158 to 161 (DAPG) is G3. Residues 220 to 223 (NKMD) and 262 to 264 (SGL) contribute to the GTP site. The G4 stretch occupies residues 220–223 (NKMD). Residues 262-264 (SGL) form a G5 region.

It belongs to the TRAFAC class translation factor GTPase superfamily. Classic translation factor GTPase family. ERF3 subfamily. In terms of assembly, component of the eRF1-eRF3-GTP ternary complex, composed of ETF1/ERF1 and ERF3 (GSPT1/ERF3A or GSPT2/ERF3B) and GTP. Component of the transient SURF (SMG1-UPF1-eRF1-eRF3) complex. The ETF1-GSPT1 complex interacts with JMJD4. Interacts with PABPC1. Interacts with SHFL.

The enzyme catalyses GTP + H2O = GDP + phosphate + H(+). GTPase component of the eRF1-eRF3-GTP ternary complex, a ternary complex that mediates translation termination in response to the termination codons UAA, UAG and UGA. GSPT1/ERF3A mediates ETF1/ERF1 delivery to stop codons: The eRF1-eRF3-GTP complex binds to a stop codon in the ribosomal A-site. GTP hydrolysis by GSPT1/ERF3A induces a conformational change that leads to its dissociation, permitting ETF1/ERF1 to accommodate fully in the A-site. Component of the transient SURF complex which recruits UPF1 to stalled ribosomes in the context of nonsense-mediated decay (NMD) of mRNAs containing premature stop codons. Required for SHFL-mediated translation termination which inhibits programmed ribosomal frameshifting (-1PRF) of mRNA from viruses and cellular genes. This is Eukaryotic peptide chain release factor GTP-binding subunit ERF3A (GSPT1) from Homo sapiens (Human).